Consider the following 359-residue polypeptide: GalNAc-alpha-(1-&gt;4)-GalNAc-alpha-(1-&gt;3)-diNAcBac-PP-undecaprenol alpha-1,4-N-acetyl-D-galactosaminyltransferase (359 aa).

A substrate-binding site is contributed by E17. Y45 provides a ligand contact to UDP-N-acetyl-alpha-D-galactosamine. 71–74 is a substrate binding site; that stretch reads RFKK. UDP-N-acetyl-alpha-D-galactosamine contacts are provided by residues H117, R190, K195, V246, and 266-274; that span reads EGLPTVLIE. R190 contributes to the substrate binding site.

The protein belongs to the glycosyltransferase group 1 family.

The protein localises to the cell inner membrane. It carries out the reaction N-acetyl-alpha-D-galactosaminyl-(1-&gt;4)-N-acetyl-alpha-D-galactosaminyl-(1-&gt;3)-N,N'-diacetyl-alpha-D-bacillosaminyl-tri-trans,heptacis-undecaprenyl diphosphate + 3 UDP-N-acetyl-alpha-D-galactosamine = [alpha-D-GalNAc-(1-&gt;4)]4-alpha-D-GalNAc-(1-&gt;3)-alpha-D-diNAcBac-tri-trans,hepta-cis-undecaprenyl diphosphate + 3 UDP + 3 H(+). The protein operates within protein modification; protein glycosylation. In terms of biological role, processive glycosyltransferase that is part of the biosynthetic pathway of the lipid-linked oligosaccharide (LLO) that serves as the glycan donor in bacterial protein N-glycosylation. Catalyzes the transfer of exactly three alpha-(1-&gt;4)-N-acetylgalactosamine (GalNAc) units to the growing LLO precursor, GalNAc-alpha-(1-&gt;4)-GalNAc-alpha-(1-&gt;3)-diNAcBac-PP-undecaprenyl. Cannot accept UDP-GlcNAc as substrate. This chain is GalNAc-alpha-(1-&gt;4)-GalNAc-alpha-(1-&gt;3)-diNAcBac-PP-undecaprenol alpha-1,4-N-acetyl-D-galactosaminyltransferase, found in Campylobacter jejuni subsp. jejuni serotype O:2 (strain ATCC 700819 / NCTC 11168).